We begin with the raw amino-acid sequence, 423 residues long: 3-phosphoshikimate 1-carboxyvinyltransferase (423 aa).

3-phosphoshikimate-binding residues include Lys19, Ser20, and Arg24. Lys19 serves as a coordination point for phosphoenolpyruvate. Residues Gly89 and Arg118 each coordinate phosphoenolpyruvate. 3-phosphoshikimate contacts are provided by Ser164, Ser165, Gln166, Ser192, Asp304, and Lys331. Gln166 provides a ligand contact to phosphoenolpyruvate. The active-site Proton acceptor is the Asp304. 2 residues coordinate phosphoenolpyruvate: Arg335 and Arg377.

It belongs to the EPSP synthase family. In terms of assembly, monomer.

It localises to the cytoplasm. The enzyme catalyses 3-phosphoshikimate + phosphoenolpyruvate = 5-O-(1-carboxyvinyl)-3-phosphoshikimate + phosphate. The protein operates within metabolic intermediate biosynthesis; chorismate biosynthesis. In terms of biological role, catalyzes the transfer of the enolpyruvyl moiety of phosphoenolpyruvate (PEP) to the 5-hydroxyl of shikimate-3-phosphate (S3P) to produce enolpyruvyl shikimate-3-phosphate and inorganic phosphate. The chain is 3-phosphoshikimate 1-carboxyvinyltransferase from Korarchaeum cryptofilum (strain OPF8).